Reading from the N-terminus, the 815-residue chain is 1,4-alpha-glucan branching enzyme GlgB (815 aa).

Asp405 (nucleophile) is an active-site residue. The Proton donor role is filled by Glu458.

It belongs to the glycosyl hydrolase 13 family. GlgB subfamily. In terms of assembly, monomer.

The enzyme catalyses Transfers a segment of a (1-&gt;4)-alpha-D-glucan chain to a primary hydroxy group in a similar glucan chain.. Its pathway is glycan biosynthesis; glycogen biosynthesis. Its function is as follows. Catalyzes the formation of the alpha-1,6-glucosidic linkages in glycogen by scission of a 1,4-alpha-linked oligosaccharide from growing alpha-1,4-glucan chains and the subsequent attachment of the oligosaccharide to the alpha-1,6 position. This Histophilus somni (strain 2336) (Haemophilus somnus) protein is 1,4-alpha-glucan branching enzyme GlgB.